The sequence spans 362 residues: Peptide chain release factor 1 (362 aa).

The residue at position 237 (Gln237) is an N5-methylglutamine.

The protein belongs to the prokaryotic/mitochondrial release factor family. Post-translationally, methylated by PrmC. Methylation increases the termination efficiency of RF1.

Its subcellular location is the cytoplasm. Functionally, peptide chain release factor 1 directs the termination of translation in response to the peptide chain termination codons UAG and UAA. The sequence is that of Peptide chain release factor 1 from Legionella pneumophila (strain Paris).